The chain runs to 907 residues: Protein translocase subunit SecA (907 aa).

ATP-binding positions include glutamine 87, 105 to 109 (GEGKT), and aspartate 512. The interval 862 to 885 (AENQLDDGHSSDQNHSPMVRDERK) is disordered. Positions 867–885 (DDGHSSDQNHSPMVRDERK) are enriched in basic and acidic residues. Positions 892, 894, 903, and 904 each coordinate Zn(2+).

Belongs to the SecA family. Monomer and homodimer. Part of the essential Sec protein translocation apparatus which comprises SecA, SecYEG and auxiliary proteins SecDF-YajC and YidC. The cofactor is Zn(2+).

It is found in the cell inner membrane. It localises to the cytoplasm. It catalyses the reaction ATP + H2O + cellular proteinSide 1 = ADP + phosphate + cellular proteinSide 2.. Its function is as follows. Part of the Sec protein translocase complex. Interacts with the SecYEG preprotein conducting channel. Has a central role in coupling the hydrolysis of ATP to the transfer of proteins into and across the cell membrane, serving both as a receptor for the preprotein-SecB complex and as an ATP-driven molecular motor driving the stepwise translocation of polypeptide chains across the membrane. The polypeptide is Protein translocase subunit SecA (Aliivibrio salmonicida (strain LFI1238) (Vibrio salmonicida (strain LFI1238))).